We begin with the raw amino-acid sequence, 353 residues long: Photosystem II protein D1 (353 aa).

An N-acetylthreonine modification is found at threonine 2. Threonine 2 bears the Phosphothreonine mark. Transmembrane regions (helical) follow at residues 29-46 (YIGW…TATS), 118-133 (HFLL…EWEL), and 142-156 (WIAV…AATA). A chlorophyll a-binding site is contributed by histidine 118. Tyrosine 126 provides a ligand contact to pheophytin a. [CaMn4O5] cluster contacts are provided by aspartate 170 and glutamate 189. A helical membrane pass occupies residues 197 to 218 (FHMLGVAGVFGGSLFSAMHGSL). A chlorophyll a-binding site is contributed by histidine 198. A quinone is bound by residues histidine 215 and 264-265 (SF). Residue histidine 215 participates in Fe cation binding. Histidine 272 serves as a coordination point for Fe cation. The chain crosses the membrane as a helical span at residues 274–288 (FLAAWPVIGIWFTAL). 4 residues coordinate [CaMn4O5] cluster: histidine 332, glutamate 333, aspartate 342, and alanine 344. Residues 345 to 353 (SVEAPSVNG) constitute a propeptide that is removed on maturation.

It belongs to the reaction center PufL/M/PsbA/D family. PSII is composed of 1 copy each of membrane proteins PsbA, PsbB, PsbC, PsbD, PsbE, PsbF, PsbH, PsbI, PsbJ, PsbK, PsbL, PsbM, PsbT, PsbX, PsbY, PsbZ, Psb30/Ycf12, at least 3 peripheral proteins of the oxygen-evolving complex and a large number of cofactors. It forms dimeric complexes. It depends on The D1/D2 heterodimer binds P680, chlorophylls that are the primary electron donor of PSII, and subsequent electron acceptors. It shares a non-heme iron and each subunit binds pheophytin, quinone, additional chlorophylls, carotenoids and lipids. D1 provides most of the ligands for the Mn4-Ca-O5 cluster of the oxygen-evolving complex (OEC). There is also a Cl(-1) ion associated with D1 and D2, which is required for oxygen evolution. The PSII complex binds additional chlorophylls, carotenoids and specific lipids. as a cofactor. Tyr-161 forms a radical intermediate that is referred to as redox-active TyrZ, YZ or Y-Z. In terms of processing, C-terminally processed by CTPA; processing is essential to allow assembly of the oxygen-evolving complex and thus photosynthetic growth.

The protein resides in the plastid. Its subcellular location is the chloroplast thylakoid membrane. The enzyme catalyses 2 a plastoquinone + 4 hnu + 2 H2O = 2 a plastoquinol + O2. Photosystem II (PSII) is a light-driven water:plastoquinone oxidoreductase that uses light energy to abstract electrons from H(2)O, generating O(2) and a proton gradient subsequently used for ATP formation. It consists of a core antenna complex that captures photons, and an electron transfer chain that converts photonic excitation into a charge separation. The D1/D2 (PsbA/PsbD) reaction center heterodimer binds P680, the primary electron donor of PSII as well as several subsequent electron acceptors. This Chlorokybus atmophyticus (Soil alga) protein is Photosystem II protein D1.